The primary structure comprises 371 residues: tRNA (guanine(26)-N(2))-dimethyltransferase (371 aa).

Residues 4-368 (IEVTEGRTTF…APLDAIAAAL (365 aa)) enclose the Trm1 methyltransferase domain. R41, R66, D82, D108, and A109 together coordinate S-adenosyl-L-methionine. C237, C240, C256, and C259 together coordinate Zn(2+).

The protein belongs to the class I-like SAM-binding methyltransferase superfamily. Trm1 family.

The enzyme catalyses guanosine(26) in tRNA + 2 S-adenosyl-L-methionine = N(2)-dimethylguanosine(26) in tRNA + 2 S-adenosyl-L-homocysteine + 2 H(+). In terms of biological role, dimethylates a single guanine residue at position 26 of a number of tRNAs using S-adenosyl-L-methionine as donor of the methyl groups. In Methanosphaerula palustris (strain ATCC BAA-1556 / DSM 19958 / E1-9c), this protein is tRNA (guanine(26)-N(2))-dimethyltransferase.